Reading from the N-terminus, the 279-residue chain is 3-methyl-2-oxobutanoate hydroxymethyltransferase (279 aa).

Residues Asp-43 and Asp-82 each contribute to the Mg(2+) site. Residues 43 to 44 (DS), Asp-82, and Lys-112 each bind 3-methyl-2-oxobutanoate. Glu-114 contributes to the Mg(2+) binding site. Glu-181 serves as the catalytic Proton acceptor.

Belongs to the PanB family. Homodecamer; pentamer of dimers. Mg(2+) is required as a cofactor.

It is found in the cytoplasm. It carries out the reaction 3-methyl-2-oxobutanoate + (6R)-5,10-methylene-5,6,7,8-tetrahydrofolate + H2O = 2-dehydropantoate + (6S)-5,6,7,8-tetrahydrofolate. Its pathway is cofactor biosynthesis; (R)-pantothenate biosynthesis; (R)-pantoate from 3-methyl-2-oxobutanoate: step 1/2. Functionally, catalyzes the reversible reaction in which hydroxymethyl group from 5,10-methylenetetrahydrofolate is transferred onto alpha-ketoisovalerate to form ketopantoate. This chain is 3-methyl-2-oxobutanoate hydroxymethyltransferase, found in Shouchella clausii (strain KSM-K16) (Alkalihalobacillus clausii).